The primary structure comprises 218 residues: Cytochrome P450 3A19 (218 aa).

Residue Cys-153 coordinates heme.

It belongs to the cytochrome P450 family. The cofactor is heme.

It is found in the endoplasmic reticulum membrane. The protein localises to the microsome membrane. It catalyses the reaction an organic molecule + reduced [NADPH--hemoprotein reductase] + O2 = an alcohol + oxidized [NADPH--hemoprotein reductase] + H2O + H(+). Functionally, cytochromes P450 are a group of heme-thiolate monooxygenases. In liver microsomes, this enzyme is involved in an NADPH-dependent electron transport pathway. It oxidizes a variety of structurally unrelated compounds, including steroids, fatty acids, and xenobiotics. The sequence is that of Cytochrome P450 3A19 (CYP3A19) from Capra hircus aegagrus (Wild goat).